Here is a 274-residue protein sequence, read N- to C-terminus: 3-methyl-2-oxobutanoate hydroxymethyltransferase (274 aa).

2 residues coordinate Mg(2+): aspartate 49 and aspartate 88. 3-methyl-2-oxobutanoate is bound by residues 49 to 50 (DS), aspartate 88, and lysine 118. A Mg(2+)-binding site is contributed by glutamate 120. Catalysis depends on glutamate 187, which acts as the Proton acceptor.

It belongs to the PanB family. Homodecamer; pentamer of dimers. It depends on Mg(2+) as a cofactor.

It is found in the cytoplasm. It carries out the reaction 3-methyl-2-oxobutanoate + (6R)-5,10-methylene-5,6,7,8-tetrahydrofolate + H2O = 2-dehydropantoate + (6S)-5,6,7,8-tetrahydrofolate. It participates in cofactor biosynthesis; (R)-pantothenate biosynthesis; (R)-pantoate from 3-methyl-2-oxobutanoate: step 1/2. Functionally, catalyzes the reversible reaction in which hydroxymethyl group from 5,10-methylenetetrahydrofolate is transferred onto alpha-ketoisovalerate to form ketopantoate. This chain is 3-methyl-2-oxobutanoate hydroxymethyltransferase, found in Rhodopseudomonas palustris (strain BisB18).